Reading from the N-terminus, the 124-residue chain is Large ribosomal subunit protein bL12 (124 aa).

It belongs to the bacterial ribosomal protein bL12 family. In terms of assembly, homodimer. Part of the ribosomal stalk of the 50S ribosomal subunit. Forms a multimeric L10(L12)X complex, where L10 forms an elongated spine to which 2 to 4 L12 dimers bind in a sequential fashion. Binds GTP-bound translation factors.

Forms part of the ribosomal stalk which helps the ribosome interact with GTP-bound translation factors. Is thus essential for accurate translation. The polypeptide is Large ribosomal subunit protein bL12 (Paracoccus denitrificans (strain Pd 1222)).